The chain runs to 415 residues: Multidrug resistance protein MdtA (415 aa).

An N-terminal signal peptide occupies residues 1 to 21 (MKGSYKSRWVIVIVVVIAAIA). 2 disordered regions span residues 32 to 56 (SRSA…GMRA) and 392 to 415 (EAQS…GARS). Residues 399-415 (SEEKATSREYAKKGARS) are compositionally biased toward basic and acidic residues.

Belongs to the membrane fusion protein (MFP) (TC 8.A.1) family. In terms of assembly, part of a tripartite efflux system composed of MdtA, MdtB and MdtC.

The protein localises to the cell inner membrane. Its function is as follows. The MdtABC tripartite complex confers resistance against novobiocin and deoxycholate. In Escherichia coli O7:K1 (strain IAI39 / ExPEC), this protein is Multidrug resistance protein MdtA.